The primary structure comprises 327 residues: MSFESKKPMRTWSHLAEMRKKPSEYDIVSRKLHYSTNNPDSPWELSPDSPMNLWYKQYRNASPLKHDNWDAFTDPDQLVYRTYNLMQDGQESYVQSLFDQFNEREHDQMVREGWEHTMARCYSPLRYLFHCLQMSSAYVQQMAPASTISNCCILQTADSLRWLTHTAYRTHELSLTYPDAGLGEHERELWEKEPGWQGLRELMEKQLTAFDWGEAFVSLNLVVKPMIVESIFKPLQQQAWENNDTLLPLLIDSQLKDAERHSRWSKALVKHALENPDNHAVIEGWIEKWRPLADRAAEAYLSMLSSDILPAQYLERSTSLRASILTV.

This sequence belongs to the TmoE/XamoE family. As to quaternary structure, the alkene monooxygenase multicomponent enzyme system is composed of an electron transfer component and a monooxygenase component interacting with the effector protein TmoD. The electron transfer component is composed of a ferredoxin reductase (TmoF) and a ferredoxin (TmoC), and the monooxygenase component is formed by a heterohexamer (dimer of heterotrimers) of two alpha subunits (TmoA), two beta subunits (TmoE) and two gamma subunits (TmoB).

The enzyme catalyses toluene + NADH + O2 + H(+) = 4-methylphenol + NAD(+) + H2O. Its pathway is xenobiotic degradation; toluene degradation. Inhibited by Zn(2+) and Cu(2+). In terms of biological role, component of the toluene-4-monooxygenase multicomponent enzyme system which catalyzes the O2- and NADH-dependent hydroxylation of toluene to form p-cresol. Also able to convert benzene to phenol, catechol, and 1,2,3-trihydroxybenzene by successive hydroxylations. This chain is Toluene-4-monooxygenase system, hydroxylase component subunit beta, found in Ectopseudomonas mendocina (Pseudomonas mendocina).